Consider the following 355-residue polypeptide: Peptide chain release factor 1 (355 aa).

N5-methylglutamine is present on Q230.

This sequence belongs to the prokaryotic/mitochondrial release factor family. Post-translationally, methylated by PrmC. Methylation increases the termination efficiency of RF1.

The protein resides in the cytoplasm. Functionally, peptide chain release factor 1 directs the termination of translation in response to the peptide chain termination codons UAG and UAA. This chain is Peptide chain release factor 1, found in Geobacter metallireducens (strain ATCC 53774 / DSM 7210 / GS-15).